We begin with the raw amino-acid sequence, 381 residues long: Chitin deacetylase 8 (381 aa).

Residues 1-18 (MKRLSVLCSLLLVAAALG) form the signal peptide. Disulfide bonds link cysteine 27-cysteine 39 and cysteine 32-cysteine 37. The Zn(2+) site is built by aspartate 63, histidine 117, and histidine 121. Cystine bridges form between cysteine 86-cysteine 335, cysteine 211-cysteine 216, cysteine 240-cysteine 246, cysteine 343-cysteine 365, and cysteine 348-cysteine 368. N-linked (GlcNAc...) asparagine glycosylation is present at asparagine 171.

It belongs to the carbohydrate esterase 4 (CE4) family. The cofactor is Zn(2+). In terms of tissue distribution, strongly expressed in the midgut. Has little or no expression in other tissues tested.

The protein resides in the secreted. The enzyme catalyses [(1-&gt;4)-N-acetyl-beta-D-glucosaminyl](n) + n H2O = chitosan + n acetate. Its function is as follows. Hydrolyzes the N-acetamido groups of N-acetyl-D-glucosamine (GlcNAc) residues in chitin. Shows activity towards the chitinous oligomers GlcNAc(3), GlcNAc(4), GlcNAc(5) and GlcNAc(6), but not GlcNAc or GlcNAc(2). Requires the substrate to occupy subsites 0, +1, and +2 for optimum catalysis. In Bombyx mori (Silk moth), this protein is Chitin deacetylase 8.